Consider the following 308-residue polypeptide: Probable plastid-lipid-associated protein 9, chloroplastic (308 aa).

The transit peptide at 1 to 55 directs the protein to the chloroplast; it reads MALIQHGSVSGTSAVRLSFSSSVSPPSSSPPLSRVSLNFQSEKKSCYRRMICRAM.

It belongs to the PAP/fibrillin family.

The protein resides in the plastid. Its subcellular location is the chloroplast. The protein localises to the plastoglobule. This chain is Probable plastid-lipid-associated protein 9, chloroplastic (PAP9), found in Arabidopsis thaliana (Mouse-ear cress).